The chain runs to 239 residues: 1-(5-phosphoribosyl)-5-[(5-phosphoribosylamino)methylideneamino] imidazole-4-carboxamide isomerase (239 aa).

The Proton acceptor role is filled by aspartate 8. Residue aspartate 129 is the Proton donor of the active site.

Belongs to the HisA/HisF family.

It is found in the cytoplasm. It catalyses the reaction 1-(5-phospho-beta-D-ribosyl)-5-[(5-phospho-beta-D-ribosylamino)methylideneamino]imidazole-4-carboxamide = 5-[(5-phospho-1-deoxy-D-ribulos-1-ylimino)methylamino]-1-(5-phospho-beta-D-ribosyl)imidazole-4-carboxamide. It functions in the pathway amino-acid biosynthesis; L-histidine biosynthesis; L-histidine from 5-phospho-alpha-D-ribose 1-diphosphate: step 4/9. This chain is 1-(5-phosphoribosyl)-5-[(5-phosphoribosylamino)methylideneamino] imidazole-4-carboxamide isomerase, found in Bacillus cereus (strain Q1).